The sequence spans 122 residues: Large ribosomal subunit protein uL14 (122 aa).

Belongs to the universal ribosomal protein uL14 family. As to quaternary structure, part of the 50S ribosomal subunit. Forms a cluster with proteins L3 and L19. In the 70S ribosome, L14 and L19 interact and together make contacts with the 16S rRNA in bridges B5 and B8.

Functionally, binds to 23S rRNA. Forms part of two intersubunit bridges in the 70S ribosome. In Polaromonas naphthalenivorans (strain CJ2), this protein is Large ribosomal subunit protein uL14.